Reading from the N-terminus, the 520-residue chain is tRNA-2-methylthio-N(6)-dimethylallyladenosine synthase (520 aa).

The MTTase N-terminal domain maps to 77–195 (KKFLIRTYGC…LPHLLRDAIF (119 aa)). [4Fe-4S] cluster-binding residues include Cys86, Cys122, Cys156, Cys232, Cys236, and Cys239. The Radical SAM core domain occupies 218-448 (RKNKTQAWVN…ALVNDISNKR (231 aa)). Positions 450–513 (LDYQDKIVEV…TWSLDGEIVS (64 aa)) constitute a TRAM domain.

The protein belongs to the methylthiotransferase family. MiaB subfamily. In terms of assembly, monomer. It depends on [4Fe-4S] cluster as a cofactor.

It localises to the cytoplasm. It catalyses the reaction N(6)-dimethylallyladenosine(37) in tRNA + (sulfur carrier)-SH + AH2 + 2 S-adenosyl-L-methionine = 2-methylsulfanyl-N(6)-dimethylallyladenosine(37) in tRNA + (sulfur carrier)-H + 5'-deoxyadenosine + L-methionine + A + S-adenosyl-L-homocysteine + 2 H(+). In terms of biological role, catalyzes the methylthiolation of N6-(dimethylallyl)adenosine (i(6)A), leading to the formation of 2-methylthio-N6-(dimethylallyl)adenosine (ms(2)i(6)A) at position 37 in tRNAs that read codons beginning with uridine. This is tRNA-2-methylthio-N(6)-dimethylallyladenosine synthase from Shouchella clausii (strain KSM-K16) (Alkalihalobacillus clausii).